A 130-amino-acid chain; its full sequence is Protein ApaG (130 aa).

The region spanning 3 to 127 (SAVTRGIEVT…FSLDVPEQRR (125 aa)) is the ApaG domain.

The chain is Protein ApaG from Brucella suis biovar 1 (strain 1330).